The following is a 156-amino-acid chain: Glutaredoxin-2, mitochondrial (156 aa).

A mitochondrion-targeting transit peptide spans 1 to 19; that stretch reads MSWRRAASVGRRLVASGRI. A Glutaredoxin domain is found at 50-150; sequence VNQIQETISN…PLVHQCYLKK (101 aa). C61 serves as a coordination point for [2Fe-2S] cluster. K67 serves as a coordination point for glutathione. S-glutathionyl cysteine; alternate is present on C70. An intrachain disulfide couples C70 to C73. Glutathione is bound by residues Q102 and V114. C146 provides a ligand contact to [2Fe-2S] cluster.

Belongs to the glutaredoxin family. Monomer; active form. Homodimer; inactive form. The homodimer is probably linked by 1 2Fe-2S cluster. Widely expressed. Highly expressed in testis, and at much lower level in kidney and brain.

Its subcellular location is the mitochondrion. The protein resides in the nucleus. Its activity is regulated as follows. The 2Fe-2S present in the homodimer leads to inactivation of the enzyme. The 2Fe-2S may serve as a redox sensor: the presence of one-electron oxidants or reductants leading to the loss of the 2Fe-2S cluster, subsequent monomerization and activation of the enzyme. In terms of biological role, glutathione-dependent oxidoreductase that facilitates the maintenance of mitochondrial redox homeostasis upon induction of apoptosis by oxidative stress. Involved in response to hydrogen peroxide and regulation of apoptosis caused by oxidative stress. Acts as a very efficient catalyst of monothiol reactions because of its high affinity for protein glutathione-mixed disulfides. Can receive electrons not only from glutathione (GSH), but also from thioredoxin reductase supporting both monothiol and dithiol reactions. Efficiently catalyzes both glutathionylation and deglutathionylation of mitochondrial complex I, which in turn regulates the superoxide production by the complex. Overexpression decreases the susceptibility to apoptosis and prevents loss of cardiolipin and cytochrome c release. This Mus musculus (Mouse) protein is Glutaredoxin-2, mitochondrial (Glrx2).